A 640-amino-acid polypeptide reads, in one-letter code: G protein-coupled receptor kinase 1 (640 aa).

Residues 1-201 (MEIENIVANT…LEKRPVDKHT (201 aa)) are N-terminal. Residues 52-187 (YAFVVEKQPI…IQTMYFHRFL (136 aa)) enclose the RGS domain. The 268-residue stretch at 202–469 (FRLYRVLGKG…AEEIRAHPFF (268 aa)) folds into the Protein kinase domain. ATP is bound by residues 208 to 216 (LGKGGFGEV) and K231. D327 acts as the Proton acceptor in catalysis. An AGC-kinase C-terminal domain is found at 479–544 (EPVPWKKMEA…GCVSIPWQSE (66 aa)). Positions 610–640 (GVDQQQPSTSAKPAAVRSSRAASASGRTSMI) are disordered. Over residues 619-640 (SAKPAAVRSSRAASASGRTSMI) the composition is skewed to low complexity.

The protein belongs to the protein kinase superfamily. AGC Ser/Thr protein kinase family. GPRK subfamily.

The catalysed reaction is [G-protein-coupled receptor] + ATP = [G-protein-coupled receptor]-phosphate + ADP + H(+). Its function is as follows. Specifically phosphorylates the activated forms of G protein-coupled receptors. The protein is G protein-coupled receptor kinase 1 (grk-1) of Caenorhabditis briggsae.